A 586-amino-acid polypeptide reads, in one-letter code: Probable riboflavin import ATP-binding protein RfuB (586 aa).

ABC transporter domains are found at residues Arg-46–Ile-299 and Leu-343–Thr-586. Gly-89 to Ser-96 contacts ATP.

Belongs to the ABC transporter superfamily. The complex is probably composed of two ATP-binding proteins (RfuB), two transmembrane proteins (RfuC and RfuD) and a solute-binding protein (RfuA).

Its subcellular location is the cell inner membrane. Probably part of the ABC transporter complex RfuABCD involved in riboflavin import. Probably responsible for energy coupling to the transport system. This Treponema pallidum (strain Nichols) protein is Probable riboflavin import ATP-binding protein RfuB.